The following is a 204-amino-acid chain: Phosphatidylserine decarboxylase proenzyme (204 aa).

S169 serves as the catalytic Schiff-base intermediate with substrate; via pyruvic acid. S169 carries the post-translational modification Pyruvic acid (Ser); by autocatalysis.

It belongs to the phosphatidylserine decarboxylase family. PSD-A subfamily. Heterodimer of a large membrane-associated beta subunit and a small pyruvoyl-containing alpha subunit. Pyruvate is required as a cofactor. Post-translationally, is synthesized initially as an inactive proenzyme. Formation of the active enzyme involves a self-maturation process in which the active site pyruvoyl group is generated from an internal serine residue via an autocatalytic post-translational modification. Two non-identical subunits are generated from the proenzyme in this reaction, and the pyruvate is formed at the N-terminus of the alpha chain, which is derived from the carboxyl end of the proenzyme. The post-translation cleavage follows an unusual pathway, termed non-hydrolytic serinolysis, in which the side chain hydroxyl group of the serine supplies its oxygen atom to form the C-terminus of the beta chain, while the remainder of the serine residue undergoes an oxidative deamination to produce ammonia and the pyruvoyl prosthetic group on the alpha chain.

Its subcellular location is the cell membrane. It catalyses the reaction a 1,2-diacyl-sn-glycero-3-phospho-L-serine + H(+) = a 1,2-diacyl-sn-glycero-3-phosphoethanolamine + CO2. Its pathway is phospholipid metabolism; phosphatidylethanolamine biosynthesis; phosphatidylethanolamine from CDP-diacylglycerol: step 2/2. Catalyzes the formation of phosphatidylethanolamine (PtdEtn) from phosphatidylserine (PtdSer). The sequence is that of Phosphatidylserine decarboxylase proenzyme from Solibacter usitatus (strain Ellin6076).